We begin with the raw amino-acid sequence, 319 residues long: Ribosomal RNA small subunit methyltransferase H (319 aa).

S-adenosyl-L-methionine-binding positions include 39–41, Asp-59, Phe-83, Asp-104, and Gln-111; that span reads GGH.

This sequence belongs to the methyltransferase superfamily. RsmH family.

Its subcellular location is the cytoplasm. The enzyme catalyses cytidine(1402) in 16S rRNA + S-adenosyl-L-methionine = N(4)-methylcytidine(1402) in 16S rRNA + S-adenosyl-L-homocysteine + H(+). Functionally, specifically methylates the N4 position of cytidine in position 1402 (C1402) of 16S rRNA. The sequence is that of Ribosomal RNA small subunit methyltransferase H from Ralstonia pickettii (strain 12J).